A 466-amino-acid chain; its full sequence is 3-isopropylmalate dehydratase large subunit (466 aa).

[4Fe-4S] cluster-binding residues include C347, C407, and C410.

The protein belongs to the aconitase/IPM isomerase family. LeuC type 1 subfamily. As to quaternary structure, heterodimer of LeuC and LeuD. The cofactor is [4Fe-4S] cluster.

It carries out the reaction (2R,3S)-3-isopropylmalate = (2S)-2-isopropylmalate. It participates in amino-acid biosynthesis; L-leucine biosynthesis; L-leucine from 3-methyl-2-oxobutanoate: step 2/4. In terms of biological role, catalyzes the isomerization between 2-isopropylmalate and 3-isopropylmalate, via the formation of 2-isopropylmaleate. The polypeptide is 3-isopropylmalate dehydratase large subunit (Blochmanniella floridana).